Consider the following 176-residue polypeptide: NAD(P)H-quinone oxidoreductase subunit 6, chloroplastic (176 aa).

5 helical membrane-spanning segments follow: residues 10–30 (FLLV…VLLP), 32–52 (PIFS…LYIL), 61–81 (AQLL…VMFM), 92–112 (LWTI…FLLM), and 152–172 (FFLP…GAIS).

The protein belongs to the complex I subunit 6 family. In terms of assembly, NDH is composed of at least 16 different subunits, 5 of which are encoded in the nucleus.

The protein resides in the plastid. The protein localises to the chloroplast thylakoid membrane. It catalyses the reaction a plastoquinone + NADH + (n+1) H(+)(in) = a plastoquinol + NAD(+) + n H(+)(out). The enzyme catalyses a plastoquinone + NADPH + (n+1) H(+)(in) = a plastoquinol + NADP(+) + n H(+)(out). Functionally, NDH shuttles electrons from NAD(P)H:plastoquinone, via FMN and iron-sulfur (Fe-S) centers, to quinones in the photosynthetic chain and possibly in a chloroplast respiratory chain. The immediate electron acceptor for the enzyme in this species is believed to be plastoquinone. Couples the redox reaction to proton translocation, and thus conserves the redox energy in a proton gradient. The sequence is that of NAD(P)H-quinone oxidoreductase subunit 6, chloroplastic (ndhG) from Arabidopsis thaliana (Mouse-ear cress).